Here is a 154-residue protein sequence, read N- to C-terminus: Myoglobin (154 aa).

In terms of domain architecture, Globin spans 2-148 (GLSDQEWQQV…FRNDMASKYK (147 aa)). His-65 contacts nitrite. His-65 is a binding site for O2. His-94 contributes to the heme b binding site.

In terms of assembly, monomeric.

It is found in the cytoplasm. The protein localises to the sarcoplasm. The enzyme catalyses Fe(III)-heme b-[protein] + nitric oxide + H2O = Fe(II)-heme b-[protein] + nitrite + 2 H(+). It catalyses the reaction H2O2 + AH2 = A + 2 H2O. Functionally, monomeric heme protein which primary function is to store oxygen and facilitate its diffusion within muscle tissues. Reversibly binds oxygen through a pentacoordinated heme iron and enables its timely and efficient release as needed during periods of heightened demand. Depending on the oxidative conditions of tissues and cells, and in addition to its ability to bind oxygen, it also has a nitrite reductase activity whereby it regulates the production of bioactive nitric oxide. Under stress conditions, like hypoxia and anoxia, it also protects cells against reactive oxygen species thanks to its pseudoperoxidase activity. This Struthio camelus (Common ostrich) protein is Myoglobin (MB).